The following is a 784-amino-acid chain: LPS-assembly protein LptD (784 aa).

An N-terminal signal peptide occupies residues 1–24 (MKKRIPTLLATMIASALYSHQGLA). Cystine bridges form between Cys31–Cys724 and Cys173–Cys725.

It belongs to the LptD family. As to quaternary structure, component of the lipopolysaccharide transport and assembly complex. Interacts with LptE and LptA. In terms of processing, contains two intramolecular disulfide bonds.

It is found in the cell outer membrane. In terms of biological role, together with LptE, is involved in the assembly of lipopolysaccharide (LPS) at the surface of the outer membrane. This chain is LPS-assembly protein LptD, found in Salmonella paratyphi A (strain ATCC 9150 / SARB42).